We begin with the raw amino-acid sequence, 124 residues long: Small ribosomal subunit protein bS6 (124 aa).

Belongs to the bacterial ribosomal protein bS6 family.

Its function is as follows. Binds together with bS18 to 16S ribosomal RNA. The chain is Small ribosomal subunit protein bS6 from Actinobacillus pleuropneumoniae serotype 5b (strain L20).